Consider the following 553-residue polypeptide: Transcriptional regulator HilA (553 aa).

A DNA-binding region (ompR/PhoB-type) is located at residues 11-107 (NKKFVFDDFI…LYGQGYRFNR (97 aa)). A 4-aspartylphosphate modification is found at Asp-62. A TPR repeat occupies 372-405 (ADIKYYYGWNLFMAGQLEEALQTINECLKLDPTR).

In terms of biological role, the main transcriptional regulator of the Salmonella pathogenicity island 1 (SPI1) gene expression. Activates the expression of invasion genes by a direct action at their promoters and also indirectly by increasing the level of invF. Also binds upstream of prgH and directly activates the expression of prgHIJK operon. The chain is Transcriptional regulator HilA (hilA) from Salmonella typhi.